A 424-amino-acid chain; its full sequence is UPF0229 protein PputGB1_0427 (424 aa).

Positions 81-107 (EFTAGEHIPRPQGGGGGGGGRGKAGNS) are disordered. Over residues 92 to 107 (QGGGGGGGGRGKAGNS) the composition is skewed to gly residues.

The protein belongs to the UPF0229 family.

The protein is UPF0229 protein PputGB1_0427 of Pseudomonas putida (strain GB-1).